The chain runs to 631 residues: MFDGYDSCSEDTSSSSSSEESEEEVAPLPSNLPIIKNNGQVYTYPDGKSGMATCEMCGMVGVRDAFYSKTKRFCSVSCSRSYSSNSKKASILARLQGKPPTKKAKVLQKQPLVAKLAAYAQYQATLQNQAKTKAGNSAISVEGFSWGNYINSNSFIAAPVACFKHAPMGTCWGDISENVRIEVPNTDCSLPTKVFWIAGIIKLAGYNALLRYEGFENDSSLDFWCNICGSDIHPVGWCAASGKPLVPPRTVQHKYTNWKAFLVKRLTGAKTLPPDFSQKVSESMQYPFKPCMRVEVVDKRHLCRTRVAVVESVIGGRLRLVYEESEDRTDDFWCHMHSPLIHHIGWSRSIGHRFKRSDITKKQDGHFDTPPHLFAKVKEVDQSGEWFKEGMKLEAIDPLNLSTICVATIRKVLADGFLMIGIDGSEAADGSDWFCYHATSPSIFPVGFCEINMIELTPPRGYTKLPFKWFDYLRETGSIAAPVKLFNKDVPNHGFRVGMKLEAVDLMEPRLICVATVTRIIHRLLRIHFDGWEEEYDQWVDCESPDLYPVGWCQLTGYQLQPPASQSSRESQSASSKQKKKAKSQQYKGHKKMTTSQLKEELLDGEDYSFLHGASDQESNGSATVYIKQEP.

Residues 1-31 (MFDGYDSCSEDTSSSSSSEESEEEVAPLPSN) are disordered. Residues 45 to 80 (PDGKSGMATCEMCGMVGVRDAFYSKTKRFCSVSCSR) form an FCS-type zinc finger. Zn(2+) contacts are provided by Cys54, Cys57, Cys74, and Cys78. At Lys115 the chain carries N6-acetyllysine. MBT repeat units follow at residues 144-248 (FSWG…LVPP), 256-353 (TNWK…IGHR), 354-459 (FKRS…LTPP), and 467-563 (FKWF…LQPP). Positions 563–631 (PASQSSRESQ…SATVYIKQEP (69 aa)) are disordered. Residues 564–576 (ASQSSRESQSASS) show a composition bias toward low complexity. The segment covering 577–593 (KQKKKAKSQQYKGHKKM) has biased composition (basic residues).

Monomer. Component of the NuA4 histone acetyltransferase complex. Interacts with EPC1; interaction is direct and promotes recruitment of MBTD1 into the NuA4 histone acetyltransferase complex.

It localises to the nucleus. The protein localises to the chromosome. Chromatin reader component of the NuA4 histone acetyltransferase complex, a multiprotein complex involved in transcriptional activation of select genes principally by acetylation of nucleosomal histones H4 and H2A. The NuA4 complex plays a direct role in repair of DNA double-strand breaks (DSBs) by promoting homologous recombination (HR). MBTD1 specifically recognizes and binds monomethylated and dimethylated 'Lys-20' on histone H4 (H4K20me1 and H4K20me2, respectively). In the NuA4 complex, MBTD1 promotes recruitment of the complex to H4K20me marks by competing with TP53BP1 for binding to H4K20me. Following recruitment to H4K20me at DNA breaks, the NuA4 complex catalyzes acetylation of 'Lys-15' on histone H2A (H2AK15), blocking the ubiquitination mark required for TP53BP1 localization at DNA breaks, thereby promoting homologous recombination (HR). The protein is MBT domain-containing protein 1 of Mus musculus (Mouse).